We begin with the raw amino-acid sequence, 1265 residues long: MSSLKVAVRVRPFNSREIDMDAQLIMEMENKKTRLLKPRLQSIRDAGRDNHHDFTFDYSYWSFDAEDPHFATQEQVYSDLGNDVVDCAYEGYNACVFAYGQTGSGKTFTMMGTPNNPGLIPRICEELFARMRVGQESGTGYRTHASYLEIYNERVKDLLAAQSTGHGLRVREHRSLGPYVENLSQHAVSDFDEIQECIARGNAQRTTASTNMNDTSSRSHAIFTITFVQAVFMNDMPSETVSKIHLVDLAGSERANATGATGQRLKEGAHINKSLVTLGSVISALAEQTGGGHNSSSSALATTPNGASKRVLYIPYRDSILTWLLKDSLGGNSKTIMIAALSPADCNYSETLSTLRYANRAKNIINKPTVNEDTNVKLIRELREEINKLKSMLAGDIHSLQPSLKVLADLQKKEAQEKVLTEEWTEKWKVAQSILQEQKSLGLRKSGVGVVLDSEMPHLIGIHNDVTTGVTLYSLKEGETRIGSEDADVAQDIELAGDGIRAQHCSIFLKGGVVTLHPWPLAQCWVNAHLIDEPKQISQGDIILLGRTNIFRFNNPAEAAKLRKDLSRSQLDMSRLSLITSSKENLLTCSIYSDEDGASPYKRPERQYYPQRPMSRDDPELQDENRKILDTIENALKQLNVERVQMHDQYKTKVRKLTEELIRLEQEEMDGLQLLNCREQELIARKDMLLWEKNNEKVQIDIVCRQISAFQTQLDSKKRDFSEYVAKELQELQDCGKLDEMGMKIEEGTPLNDELLLQVSDSLDLFAAQFIKDTVRRNNEEIRKLDEQIAEKERILNASTTKIAKVDETMLEIQAQLERLRLERAESEAESQAMRAKKQNMKLQLGNKSMSTSTSTNEADDVSKSDTYETCDTFHTAQSNLSLVSSPTITEGQQSPLSNCSCDAEDEAEDTRKDDLSGSSEETSRTCTAGPSSGSGSGSVGIGGSGSAPSCTPSSQAIMSDSGVCLDSRNQAILQNGHLNNYKQAVRTSDEDTGSCSSCELGRHSDVARPYCPLHSLRRKIAAQKALIMKNLETDLNKAQLDEHIADLQDLQRRYIQMEQEMLQSVQDLEAHAQCCADERSGMERQYELASSIMRSSVMSPTSMEESTSQIYSPSMTRSCPSMREFPEGEHFITIPSFVMRGAGKQTHYEYEVRIALPDGKLNILRRYSRFRELHLCMKHCYGAKISALPFPRRELFASNSEPVAKHRRRLLELYLRRLFVVCSKIPQCPIYEGPGGTGLTRASLVQLSSFFKKGLFENGKHGTG.

Residues 3–364 (SLKVAVRVRP…LRYANRAKNI (362 aa)) form the Kinesin motor domain. 100–107 (GQTGSGKT) serves as a coordination point for ATP. Disordered regions lie at residues 597 to 621 (GASPYKRPERQYYPQRPMSRDDPEL), 828 to 864 (EAESQAMRAKKQNMKLQLGNKSMSTSTSTNEADDVSK), and 884 to 954 (VSSP…CTPS). 2 coiled-coil regions span residues 619-670 (PELQ…EEMD) and 768-848 (AQFI…LGNK). Polar residues-rich tracts occupy residues 846 to 857 (GNKSMSTSTSTN), 884 to 901 (VSSPTITEGQQSPLSNCS), and 917 to 927 (SGSSEETSRTC). A compositionally biased stretch (gly residues) spans 933–946 (SGSGSGSVGIGGSG). Residues 1035–1071 (DLNKAQLDEHIADLQDLQRRYIQMEQEMLQSVQDLEA) adopt a coiled-coil conformation. Residues 1129–1259 (GEHFITIPSF…SFFKKGLFEN (131 aa)) form the PX domain.

The protein belongs to the TRAFAC class myosin-kinesin ATPase superfamily. Kinesin family. In terms of assembly, interacts with Atg8a and Rab14.

Its subcellular location is the early endosome. In terms of biological role, plus end-directed motor protein involved in asymmetric cell division of sensory organ precursor (SOP) cells by playing a role in the asymmetric localization of Sara-expressing endosomes to the pIIa daughter cell but not to the pIIb cell. Targets Sara-expressing endosomes to the central spindle which is symmetrically arranged in early cell division. During late cytokinesis, central spindle asymmetry is generated by enrichment of Patronin on the pIIb side which protects microtubules from depolymerization by Klp10A while unprotected microtubules on the pIIa side are disassembled by Klp10A, leading to the asymmetric delivery of Sara-expressing endosomes to the pIIa daughter cell. Also plays a role in regulation of autophagosome formation, fusion and positioning and is required for normal localization of Rab14. This chain is Kinesin-like protein Klp98A, found in Drosophila melanogaster (Fruit fly).